Here is a 330-residue protein sequence, read N- to C-terminus: Polyprenal reductase (330 aa).

At 1 to 16 the chain is on the cytoplasmic side; that stretch reads MAGWAGAELSVLNPLR. Residues 17 to 37 traverse the membrane as a helical segment; sequence ALWLLLAAAFLLALLLQLAPA. Topologically, residues 38-89 are lumenal; the sequence is RLLPSCALFQDLIRYGKTKQSGSRRPAVCRAFDVPKRYFSHFYVVSVLWNGS. The helical transmembrane segment at 90 to 110 threads the bilayer; that stretch reads LLWFLSQSLFLGAPFPSWLWA. The Cytoplasmic portion of the chain corresponds to 111-136; sequence LLRTLGVTQFQALGMESKASRIQGKK. A helical transmembrane segment spans residues 137 to 157; it reads LALSTFLVLVFLWVHSLRRLF. Residues 158–169 lie on the Lumenal side of the membrane; sequence ECFYVSVFSNTA. Residues 170-190 traverse the membrane as a helical segment; that stretch reads IHVVQYCFGLVYYVLVGLTVL. The Cytoplasmic portion of the chain corresponds to 191 to 206; sequence SQVPMNDKNVYALGKN. A helical membrane pass occupies residues 207–227; sequence LLLQARWFHILGMMMFFWSSA. At 228–277 the chain is on the lumenal side; the sequence is HQYKCHVILSNLRRNKKGVVIHCQHRIPFGDWFEYVSSANYLAELMIYIS. A helical membrane pass occupies residues 278–298; the sequence is MAVTFGLHNVTWWLVVTYVFF. Topologically, residues 299–330 are cytoplasmic; sequence SQALSAFFNHRFYKSTFVSYPKHRKAFLPFLF.

The protein belongs to the steroid 5-alpha reductase family. Polyprenal reductase subfamily. In terms of tissue distribution, expressed in the 2 tissues tested i.e. testis and liver.

The protein resides in the endoplasmic reticulum membrane. It catalyses the reaction a di-trans,poly-cis-dolichal + NADP(+) = a di-trans,poly-cis-polyprenal + NADPH + H(+). It carries out the reaction a 3-oxo-5alpha-steroid + NADP(+) = a 3-oxo-Delta(4)-steroid + NADPH + H(+). The catalysed reaction is androst-4-ene-3,17-dione + NADPH + H(+) = 5alpha-androstan-3,17-dione + NADP(+). The enzyme catalyses 17beta-hydroxy-5alpha-androstan-3-one + NADP(+) = testosterone + NADPH + H(+). Its pathway is protein modification; protein glycosylation. In terms of biological role, plays a key role in early steps of protein N-linked glycosylation by being involved in the conversion of polyprenol into dolichol. Acts as a polyprenal reductase that mediates the reduction of polyprenal into dolichal in a NADP-dependent mechanism. Dolichols are required for the synthesis of dolichol-linked monosaccharides and the oligosaccharide precursor used for N-glycosylation. Also able to convert testosterone (T) into 5-alpha-dihydrotestosterone (DHT). The protein is Polyprenal reductase of Rattus norvegicus (Rat).